Here is a 446-residue protein sequence, read N- to C-terminus: Chromosomal replication initiator protein DnaA (446 aa).

Residues 1–81 are domain I, interacts with DnaA modulators; sequence MENIADLWNS…AKLNIRFIIP (81 aa). Positions 81–109 are domain II; the sequence is PQSQTEEEVDYPPAKAKKMNDESNHLPQS. The domain III, AAA+ region stretch occupies residues 110-326; that stretch reads MLNPKYTFDT…GALIRVVAYS (217 aa). G154, G156, K157, and T158 together coordinate ATP. Residues 327 to 446 form a domain IV, binds dsDNA region; sequence SLINKDINAD…QIEEINDILK (120 aa).

Belongs to the DnaA family. Oligomerizes as a right-handed, spiral filament on DNA at oriC.

Its subcellular location is the cytoplasm. Its function is as follows. Plays an essential role in the initiation and regulation of chromosomal replication. ATP-DnaA binds to the origin of replication (oriC) to initiate formation of the DNA replication initiation complex once per cell cycle. Binds the DnaA box (a 9 base pair repeat at the origin) and separates the double-stranded (ds)DNA. Forms a right-handed helical filament on oriC DNA; dsDNA binds to the exterior of the filament while single-stranded (ss)DNA is stabiized in the filament's interior. The ATP-DnaA-oriC complex binds and stabilizes one strand of the AT-rich DNA unwinding element (DUE), permitting loading of DNA polymerase. After initiation quickly degrades to an ADP-DnaA complex that is not apt for DNA replication. Binds acidic phospholipids. The polypeptide is Chromosomal replication initiator protein DnaA (Bacillus cytotoxicus (strain DSM 22905 / CIP 110041 / 391-98 / NVH 391-98)).